The primary structure comprises 246 residues: U11/U12 small nuclear ribonucleoprotein 35 kDa protein (246 aa).

In terms of domain architecture, RRM spans 51-129 (LTLFVARLNL…HEIFVDYELE (79 aa)). Residue lysine 172 forms a Glycyl lysine isopeptide (Lys-Gly) (interchain with G-Cter in SUMO2) linkage. Residues 187-217 (SRSRERHWDSRTRDRDHDRGREKRWQEREPT) form a disordered region. The span at 192–217 (RHWDSRTRDRDHDRGREKRWQEREPT) shows a compositional bias: basic and acidic residues.

In terms of assembly, component of the U11/U12 snRNPs that are part of the U12-type spliceosome. Expressed in heart, liver, skeletal muscle and pancreas.

The protein resides in the nucleus. This is U11/U12 small nuclear ribonucleoprotein 35 kDa protein (SNRNP35) from Homo sapiens (Human).